Consider the following 244-residue polypeptide: Phosphate propanoyltransferase (244 aa).

52–54 contacts CoA; it reads ISA. Positions 56 and 58 each coordinate Zn(2+). R106 is a binding site for CoA. Phosphate is bound at residue R112. Zn(2+)-binding residues include E118, H166, H168, and H214. Residue N221 participates in CoA binding.

It belongs to the PduL family. As to quaternary structure, full-length protein forms large oligomers. Possible homotrimer and monomer, when purified in the absence of the encapsulation peptide (EP, residues 1-20). The EP may influence oligomerization. Zn(2+) is required as a cofactor.

It is found in the bacterial microcompartment. It catalyses the reaction propanoyl-CoA + phosphate = propanoyl phosphate + CoA. In terms of biological role, part of a bacterial microcompartment (BMC) locus required for growth on plant and algal sugars, including L-fucose and L-rhamnose. Thought to be active on lactyl-CoA in a lactaldehyde-degradation pathway. CoA is regenerated within the BMC via this enzyme, although there must also be cofactor transport across the BMC. Directly targeted to the BMC. This chain is Phosphate propanoyltransferase, found in Planctopirus limnophila (strain ATCC 43296 / DSM 3776 / IFAM 1008 / Mu 290) (Planctomyces limnophilus).